Consider the following 570-residue polypeptide: Sulfite reductase [NADPH] hemoprotein beta-component (570 aa).

[4Fe-4S] cluster contacts are provided by Cys434, Cys440, Cys479, and Cys483. Cys483 serves as a coordination point for siroheme.

The protein belongs to the nitrite and sulfite reductase 4Fe-4S domain family. In terms of assembly, alpha(8)-beta(8). The alpha component is a flavoprotein, the beta component is a hemoprotein. The cofactor is siroheme. [4Fe-4S] cluster serves as cofactor.

The catalysed reaction is hydrogen sulfide + 3 NADP(+) + 3 H2O = sulfite + 3 NADPH + 4 H(+). It functions in the pathway sulfur metabolism; hydrogen sulfide biosynthesis; hydrogen sulfide from sulfite (NADPH route): step 1/1. Its function is as follows. Component of the sulfite reductase complex that catalyzes the 6-electron reduction of sulfite to sulfide. This is one of several activities required for the biosynthesis of L-cysteine from sulfate. This is Sulfite reductase [NADPH] hemoprotein beta-component (cysI) from Salmonella typhimurium (strain LT2 / SGSC1412 / ATCC 700720).